We begin with the raw amino-acid sequence, 392 residues long: FK506-binding protein 4 (392 aa).

Disordered stretches follow at residues 58-116 and 161-284; these read NPEL…NEID and GNYV…PKTK. Composition is skewed to acidic residues over residues 73–86, 104–116, and 172–219; these read DGLE…EQEA, SESE…NEID, and SDSD…DASD. Residues Ser-80 and Ser-82 each carry the phosphoserine modification. Composition is skewed to basic and acidic residues over residues 220–234 and 252–279; these read IESR…DEKK and SAKP…ESKP. The PPIase FKBP-type domain maps to 306-392; the sequence is GTRVGMRYVG…TFDVKLVSMK (87 aa).

This sequence belongs to the FKBP-type PPIase family. FKBP3/4 subfamily. Binds to histones H3 and H4. Interacts with NOP53.

It localises to the nucleus. It carries out the reaction [protein]-peptidylproline (omega=180) = [protein]-peptidylproline (omega=0). PPIase that acts as a histone chaperone. Histone proline isomerase that increases the rate of cis-trans isomerization at 'Pro-17' (H3P16), 'Pro-31' (H3P30) and 'Pro-39 (H3P38) on the histone H3 N-terminal tail. H3P16 and H3P30 are the major proline targets with little activity shown against H3P38. H3P38 isomerization influences SET2-mediated H3K36 methylation thereby regulating gene expression. The sequence is that of FK506-binding protein 4 from Saccharomyces cerevisiae (strain ATCC 204508 / S288c) (Baker's yeast).